The following is a 274-amino-acid chain: MSTEVRIKRITTRDIRARKGAEPLVVLTAYTAPIARLLDPICDILLVGDSLGMVVYGMETTLAVTLEMMINHGAAVVRSSSRACVVVDMPFGSYQESKEQAFRNCARVMAETGCAAVKLEGGRELAETIRFLTDRGIPVMAHIGLKPQAVHAAGGFRAQGRIESEAEAIRADARAITEAGAFSVVVEGTVEPVAQALSAEIAIPTIGIGASAACDGQVLVIDDLVGLFDDFTPKFVKRYADLRPIITKAAEDYAAEVKARTFPGPEHCFGVAKK.

Mg(2+)-binding residues include aspartate 49 and aspartate 88. Residues 49 to 50 (DS), aspartate 88, and lysine 118 contribute to the 3-methyl-2-oxobutanoate site. Glutamate 120 provides a ligand contact to Mg(2+). The active-site Proton acceptor is the glutamate 187.

It belongs to the PanB family. In terms of assembly, homodecamer; pentamer of dimers. Mg(2+) serves as cofactor.

It is found in the cytoplasm. It catalyses the reaction 3-methyl-2-oxobutanoate + (6R)-5,10-methylene-5,6,7,8-tetrahydrofolate + H2O = 2-dehydropantoate + (6S)-5,6,7,8-tetrahydrofolate. Its pathway is cofactor biosynthesis; (R)-pantothenate biosynthesis; (R)-pantoate from 3-methyl-2-oxobutanoate: step 1/2. Catalyzes the reversible reaction in which hydroxymethyl group from 5,10-methylenetetrahydrofolate is transferred onto alpha-ketoisovalerate to form ketopantoate. The polypeptide is 3-methyl-2-oxobutanoate hydroxymethyltransferase (Paramagnetospirillum magneticum (strain ATCC 700264 / AMB-1) (Magnetospirillum magneticum)).